A 186-amino-acid polypeptide reads, in one-letter code: Elongation factor P (186 aa).

The protein belongs to the elongation factor P family.

The protein resides in the cytoplasm. It participates in protein biosynthesis; polypeptide chain elongation. In terms of biological role, involved in peptide bond synthesis. Stimulates efficient translation and peptide-bond synthesis on native or reconstituted 70S ribosomes in vitro. Probably functions indirectly by altering the affinity of the ribosome for aminoacyl-tRNA, thus increasing their reactivity as acceptors for peptidyl transferase. The protein is Elongation factor P of Laribacter hongkongensis (strain HLHK9).